A 384-amino-acid chain; its full sequence is Flap endonuclease 1 (384 aa).

An N-domain region spans residues methionine 1–arginine 105. Aspartate 34 provides a ligand contact to Mg(2+). Position 71 (arginine 71) interacts with DNA. Mg(2+)-binding residues include aspartate 87, glutamate 159, glutamate 161, aspartate 180, and aspartate 182. Residues glutamate 123–tyrosine 254 form an I-domain region. Glutamate 159 is a binding site for DNA. The DNA site is built by glycine 232 and aspartate 234. A Mg(2+)-binding site is contributed by aspartate 234. The interaction with PCNA stretch occupies residues glycine 337–phenylalanine 345. Positions serine 353–phenylalanine 384 are disordered. Positions lysine 374–phenylalanine 384 are enriched in basic residues.

Belongs to the XPG/RAD2 endonuclease family. FEN1 subfamily. In terms of assembly, interacts with PCNA. Three molecules of FEN1 bind to one PCNA trimer with each molecule binding to one PCNA monomer. PCNA stimulates the nuclease activity without altering cleavage specificity. Requires Mg(2+) as cofactor. In terms of processing, phosphorylated. Phosphorylation upon DNA damage induces relocalization to the nuclear plasma.

Its subcellular location is the nucleus. The protein resides in the nucleolus. The protein localises to the nucleoplasm. It localises to the mitochondrion. Functionally, structure-specific nuclease with 5'-flap endonuclease and 5'-3' exonuclease activities involved in DNA replication and repair. During DNA replication, cleaves the 5'-overhanging flap structure that is generated by displacement synthesis when DNA polymerase encounters the 5'-end of a downstream Okazaki fragment. It enters the flap from the 5'-end and then tracks to cleave the flap base, leaving a nick for ligation. Also involved in the long patch base excision repair (LP-BER) pathway, by cleaving within the apurinic/apyrimidinic (AP) site-terminated flap. Acts as a genome stabilization factor that prevents flaps from equilibrating into structures that lead to duplications and deletions. Also possesses 5'-3' exonuclease activity on nicked or gapped double-stranded DNA, and exhibits RNase H activity. Also involved in replication and repair of rDNA and in repairing mitochondrial DNA. In Micromonas commoda (strain RCC299 / NOUM17 / CCMP2709) (Picoplanktonic green alga), this protein is Flap endonuclease 1.